Here is a 92-residue protein sequence, read N- to C-terminus: Beta-2-microglobulin (92 aa).

The Ig-like C1-type domain maps to 2–91 (PQIQVYTRHP…VSLNEPKTVI (90 aa)). Cys-22 and Cys-77 are oxidised to a cystine.

The protein belongs to the beta-2-microglobulin family. In terms of assembly, heterodimer of an alpha chain and a beta chain. Beta-2-microglobulin is the beta-chain of major histocompatibility complex class I molecules.

The protein resides in the secreted. In terms of biological role, component of the class I major histocompatibility complex (MHC). Involved in the presentation of peptide antigens to the immune system. This Mus cervicolor (Fawn-colored mouse) protein is Beta-2-microglobulin (B2m).